The sequence spans 478 residues: Alpha-1,3-mannosyl-glycoprotein 4-beta-N-acetylglucosaminyltransferase C (478 aa).

Residues 1-23 (MFKFHQMKHIFEILDKMRCLRKR) lie on the Cytoplasmic side of the membrane. A helical; Signal-anchor for type II membrane protein transmembrane segment spans residues 24 to 44 (STVSFLGVLVIFLLFMNLYIE). Over 45 to 478 (DSYVLEGDKQ…IIRSISIWTS (434 aa)) the chain is Lumenal. N84 and N215 each carry an N-linked (GlcNAc...) asparagine glycan.

This sequence belongs to the glycosyltransferase 54 family. A divalent metal cation is required as a cofactor.

Its subcellular location is the golgi apparatus membrane. It carries out the reaction N(4)-{beta-D-GlcNAc-(1-&gt;2)-alpha-D-Man-(1-&gt;3)-[beta-D-GlcNAc-(1-&gt;2)-alpha-D-Man-(1-&gt;6)]-beta-D-Man-(1-&gt;4)-beta-D-GlcNAc-(1-&gt;4)-beta-D-GlcNAc}-L-asparaginyl-[protein] + UDP-N-acetyl-alpha-D-glucosamine = N(4)-{beta-D-GlcNAc-(1-&gt;2)-[beta-D-GlcNAc-(1-&gt;4)]-alpha-D-Man-(1-&gt;3)-[beta-D-GlcNAc-(1-&gt;2)-alpha-D-Man-(1-&gt;6)]-beta-D-Man-(1-&gt;4)-beta-D-GlcNAc-(1-&gt;4)-beta-D-GlcNAc}-L-asparaginyl-[protein] + UDP + H(+). It participates in protein modification; protein glycosylation. Glycosyltransferase that participates in the transfer of N-acetylglucosamine (GlcNAc) to the core mannose residues of N-linked glycans. Catalyzes the formation of the GlcNAcbeta1-4 branch on the GlcNAcbeta1-2Manalpha1-3 arm of the core structure of N-linked glycans. Essential for the production of tri- and tetra-antennary N-linked sugar chains. Does not catalyze the transfer of GlcNAc to the Manalpha1-6 arm to form GlcNAcBeta1-4Manalpha1-6 linkage ('GnT-VI' activity). In Macaca fascicularis (Crab-eating macaque), this protein is Alpha-1,3-mannosyl-glycoprotein 4-beta-N-acetylglucosaminyltransferase C (MGAT4C).